A 342-amino-acid chain; its full sequence is Uroporphyrinogen decarboxylase (342 aa).

Residues 21–25 (RQAGR), Asp71, Tyr148, Ser203, and His316 contribute to the substrate site.

It belongs to the uroporphyrinogen decarboxylase family. In terms of assembly, homodimer.

The protein localises to the cytoplasm. It carries out the reaction uroporphyrinogen III + 4 H(+) = coproporphyrinogen III + 4 CO2. It functions in the pathway porphyrin-containing compound metabolism; protoporphyrin-IX biosynthesis; coproporphyrinogen-III from 5-aminolevulinate: step 4/4. In terms of biological role, catalyzes the decarboxylation of four acetate groups of uroporphyrinogen-III to yield coproporphyrinogen-III. The protein is Uroporphyrinogen decarboxylase of Campylobacter curvus (strain 525.92).